The primary structure comprises 640 residues: G protein-coupled receptor kinase 1 (640 aa).

An N-terminal region spans residues 1 to 201 (MEIENIVANT…LEKRPVDKHT (201 aa)). The RGS domain maps to 52–187 (YAFVVEKQPI…IQTMYFHRFL (136 aa)). The 268-residue stretch at 202-469 (FRLYRVLGKG…AEEIRAHPFF (268 aa)) folds into the Protein kinase domain. ATP is bound by residues 208 to 216 (LGKGGFGEV) and lysine 231. The active-site Proton acceptor is the aspartate 327. The AGC-kinase C-terminal domain occupies 479–544 (EPVPWKKMEA…GCVSIPWQSE (66 aa)). The disordered stretch occupies residues 610–640 (GVDQQQPSTSAKPAAVRSSRAASASGRTSMI). Positions 619–640 (SAKPAAVRSSRAASASGRTSMI) are enriched in low complexity.

It belongs to the protein kinase superfamily. AGC Ser/Thr protein kinase family. GPRK subfamily.

The catalysed reaction is [G-protein-coupled receptor] + ATP = [G-protein-coupled receptor]-phosphate + ADP + H(+). Its function is as follows. Specifically phosphorylates the activated forms of G protein-coupled receptors. The chain is G protein-coupled receptor kinase 1 (grk-1) from Caenorhabditis briggsae.